Consider the following 146-residue polypeptide: uncharacterized protein (146 aa).

An N-terminal signal peptide occupies residues 1-24; it reads MVIYYGKKNCTLLLLLFILCNIYS. 2 N-linked (GlcNAc...) asparagine glycosylation sites follow: asparagine 99 and asparagine 106.

This is an uncharacterized protein from Saccharomyces cerevisiae (strain ATCC 204508 / S288c) (Baker's yeast).